Consider the following 994-residue polypeptide: NACHT, LRR and PYD domains-containing protein 4 (994 aa).

One can recognise a Pyrin domain in the interval 1-94 (MAASFFSDFG…CMKVMRERTG (94 aa)). An NACHT domain is found at 149–472 (RTVIIQGPQG…FYLLKSHLDH (324 aa)). 155–162 (GPQGIGKT) is an ATP binding site. LRR repeat units follow at residues 637-660 (SGHL…TWCN), 698-721 (YLSF…LNYP), 722-745 (AGNV…VLAG), 750-777 (NKKL…LCSP), 806-833 (NKSV…ALKH), 863-886 (NQNL…LLCR), 920-943 (SKTL…VLCE), and 949-972 (ECAL…LLTA).

This sequence belongs to the NLRP family. Interacts with CHUK/IKKA, inhibiting its kinase activity.

Functionally, may be involved in inflammation and recognition of cytosolic pathogen-associated molecular patterns (PAMPs) not intercepted by membrane-bound receptors. Acts as a negative regulator of the type I interferon signaling pathway by serving as an adapter to promote DTX4-mediated ubiquitination of activated TBK1, and its subsequent degradation. Suppresses NF-kappaB induction by the cytokines TNFA and IL1B, suggesting that it operates at a point of convergence in these two cytokine signaling pathways. The protein is NACHT, LRR and PYD domains-containing protein 4 of Homo sapiens (Human).